A 456-amino-acid polypeptide reads, in one-letter code: Aromatic amino acid transport protein AroP (456 aa).

Residues 1–18 (MEGQQHGEQLKRGLKNRH) are Cytoplasmic-facing. A helical membrane pass occupies residues 19–39 (IQLIALGGAIGTGLFLGSASV). The Periplasmic segment spans residues 40-41 (IQ). Residues 42 to 62 (SAGPGIILGYAIAGFIAFLIM) traverse the membrane as a helical segment. Residues 63–85 (RQLGEMVVEEPVAGSFSHFAYKY) are Cytoplasmic-facing. A helical transmembrane segment spans residues 86–106 (WGSFAGFASGWNYWVLYVLVA). The Periplasmic segment spans residues 107 to 116 (MAELTAVGKY). The helical transmembrane segment at 117 to 137 (IQFWYPEIPTWVSAAVFFVVI) threads the bilayer. The Cytoplasmic portion of the chain corresponds to 138–154 (NAINLTNVKVFGEMEFW). The chain crosses the membrane as a helical span at residues 155 to 175 (FAIIKVIAVVAMIIFGAWLLF). Residues 176–200 (SGNGGPQASVSNLWDQGGFLPHGFT) are Periplasmic-facing. A helical membrane pass occupies residues 201–221 (GLVMMMAIIMFSFGGLELVGI). Residues 222–239 (TAAEADNPEQSIPKATNQ) lie on the Cytoplasmic side of the membrane. A helical membrane pass occupies residues 240–260 (VIYRILIFYIGSLAVLLSLMP). Topologically, residues 261–270 (WTRVTADTSP) are periplasmic. The chain crosses the membrane as a helical span at residues 271–291 (FVLIFHELGDTFVANALNIVV). Topologically, residues 292-332 (LTAALSVYNSCVYCNSRMLFGLAQQGNAPKALASVDKRGVP) are cytoplasmic. Residues 333 to 353 (VNTILVSALVTALCVLINYLA) form a helical membrane-spanning segment. Over 354 to 357 (PESA) the chain is Periplasmic. A helical membrane pass occupies residues 358–378 (FGLLMALVVSALVINWAMISL). Residues 379 to 398 (AHMKFRRAKQEQGVVTRFPA) lie on the Cytoplasmic side of the membrane. Residues 399–419 (LLYPLGNWICLLFMAAVLVIM) traverse the membrane as a helical segment. Topologically, residues 420-424 (LMTPG) are periplasmic. Residues 425 to 445 (MAISVYLIPVWLIVLGIGYLF) traverse the membrane as a helical segment. Over 446–456 (KEKTAKAVKAH) the chain is Cytoplasmic.

Belongs to the amino acid-polyamine-organocation (APC) superfamily. Amino acid transporter (AAT) (TC 2.A.3.1) family.

It localises to the cell inner membrane. The enzyme catalyses L-phenylalanine(in) + H(+)(in) = L-phenylalanine(out) + H(+)(out). The catalysed reaction is L-tryptophan(in) + H(+)(in) = L-tryptophan(out) + H(+)(out). It carries out the reaction L-tyrosine(in) + H(+)(in) = L-tyrosine(out) + H(+)(out). Functionally, permease that is involved in the active transport across the cytoplasmic membrane of all three aromatic amino acids, phenylalanine, tyrosine and tryptophan. The sequence is that of Aromatic amino acid transport protein AroP (aroP) from Escherichia coli O6:H1 (strain CFT073 / ATCC 700928 / UPEC).